The primary structure comprises 2590 residues: 5-methylorsellinic acid synthase (2590 aa).

An N-terminal acylcarrier protein transacylase domain (SAT) region spans residues 6 to 255 (LLCGSQAIQW…HNQVNRELFA (250 aa)). In terms of domain architecture, Ketosynthase family 3 (KS3) spans 369-784 (GDSIAIVGMG…GSNAALIVTQ (416 aa)). Catalysis depends on for beta-ketoacyl synthase activity residues Cys-534, His-669, and His-707. Positions 891–1191 (LAFGGQTGNV…HAVNLGGPEP (301 aa)) are malonyl-CoA:ACP transacylase (MAT) domain. The active-site For acyl/malonyl transferase activity is the Ser-978. The interval 1263–1393 (PKLVSFVKYL…GTVNISSLTS (131 aa)) is N-terminal hotdog fold. One can recognise a PKS/mFAS DH domain in the interval 1263–1569 (PKLVSFVKYL…FAKVPTASLK (307 aa)). The tract at residues 1267 to 1568 (SFVKYLDSNR…RFAKVPTASL (302 aa)) is product template (PT) domain. Catalysis depends on His-1297, which acts as the Proton acceptor; for dehydratase activity. The C-terminal hotdog fold stretch occupies residues 1421 to 1569 (TSAIQGSLVY…FAKVPTASLK (149 aa)). The active-site Proton donor; for dehydratase activity is the Asp-1481. The interval 1587–1612 (LKVTEPSANVPKAQPVSTYPKPMKPA) is disordered. 2 Carrier domains span residues 1617 to 1691 (AQIR…ASGT) and 1736 to 1812 (SAQA…IPKP). Ser-1651 and Ser-1772 each carry O-(pantetheine 4'-phosphoryl)serine. Residues 1980–2212 (QHRGEHKLLN…GFRHVDWSDD (233 aa)) form a methyltransferase (CMeT) domain region. The tract at residues 2282 to 2590 (LMIHGGGHIM…EGYEFLLRHL (309 aa)) is thioesterase (TE) domain.

It carries out the reaction 3 malonyl-CoA + acetyl-CoA + S-adenosyl-L-methionine + H(+) = 5-methylorsellinate + S-adenosyl-L-homocysteine + 3 CO2 + 4 CoA. Its pathway is secondary metabolite biosynthesis. Non-reducing polyketide synthase; part of the cluster A that mediates the biosynthesis of azasperpyranones, members of the azaphilone family that exhibit anti-cancer activities. Azasperpyranones are synthesized by 2 clusters, A and B. Cluster A is responsible for the production of the polyhydric phenol moiety while the azaphilonoid scaffold is produced by the cluster B. The non-reducing polyketide synthase ATEG_03629 produces 5-methyl orsellinic acid, which is then reduced to 5-methyl orsellinic aldehyde by the NRPS-like protein ATEG_03630. 5-methyl orsellinic aldehyde is then first hydroxylated by the FAD-dependent monooxygenase ATEG_03635 and subsequently hydroxylated by the cytochrome P450 monooxygenase ATEG_03631 to produce the unstable polyhydric phenol precursor of azasperpyranones. On the other hand, the polyketide synthase ATEG_07659 is responsible for producing the 3,5-dimethyloctadienone moiety from acetyl-CoA, three malonyl-CoA, and two S-adenosyl methionines (SAM). The 3,5-dimethyloctadienone moiety is then loaded onto the SAT domain of ATEG_07661 and extended with four malonyl-CoA and one SAM, which leads to the formation of 2,4-dihydroxy-6-(5,7-dimethyl-2-oxo-trans-3-trans-5-nonadienyl)-3-methylbenzaldehyde (compound 8) after reductive release and aldol condensation. The FAD-dependent monooxygenase ATEG_07662 is the next enzyme in the biosynthesis sequence and hydroxylates the side chain at the benzylic position of compound 8. In Aspergillus nidulans, afoF, the ortholog of the FAD-dependent oxygenase ATEG_07660, is the key enzyme for the biosynthesis of asperfuranone by catalyzing the hydroxylation at C-8 of to prevent the formation of a six-membered ring hemiacetal intermediate and thus facilitating the formation of a five-membered ring to produce asperfuranone. In Aspergillus terreus, ATEG_07660 is probably not functional, which leads to the formation of the six-membered ring hemiacetal intermediate presperpyranone instead of asperfuranone. Finally, ATEG_03636 is involved in the condensation of the polyhydric phenol moiety produced by cluster A and the perasperpyranone precursor produced by cluster B, to yield azasperpyranone A. Further modifications of azasperpyranone A result in the production of derivatives, including azasperpyranone B to F. This is 5-methylorsellinic acid synthase from Aspergillus terreus (strain NIH 2624 / FGSC A1156).